The chain runs to 219 residues: Probable N-acetyltransferase camello (219 aa).

2 helical membrane-spanning segments follow: residues 42-62 (FYFI…SYVL) and 64-84 (LTSL…EFHG). The 157-residue stretch at 62-218 (LSLTSLVALL…TVIYYRYDIK (157 aa)) folds into the N-acetyltransferase domain.

It belongs to the camello family. At the beginning of gastrulation, expressed in deep cells of the presumptive mesoderm. At later gastrulation stages, expressed at the interface between already involuted and preinvoluted mesoderm. At late neurula and tailbud stages, expressed in the deep mass of cells lying ventrally and laterally to the closed blastopore.

The protein localises to the golgi apparatus membrane. Plays a role in regulation of gastrulation, possibly by controlled reduction of cell adhesion which is necessary for optimal cell motility. The chain is Probable N-acetyltransferase camello from Xenopus laevis (African clawed frog).